The sequence spans 179 residues: Protein YjaZ (179 aa).

The protein is Protein YjaZ of Escherichia coli (strain K12).